The following is a 338-amino-acid chain: MGTDIGDLLQKRKIELSDLTNQVVAIDAFNTLHQFLSIIRQRDGNPLVNSRGKVTSHLSGLLYRTASLIEVGIKPVFIFDGKPPDLKSETLNRRKEVRESSLEKWENAKVEGDLEAAYKYAQASSKVDQEIVEDSKYLLSIMGIPWIQAPCEGEAQAAHMVLKKDADYVASQDYDSFLFGAPTVIRNLAVTGKRKLPGKHVYVDVELELIELEETLGVLGINREQLIDIAICVGTDFNKGLEKVGPKTALKLIKKHGDIHAVLREKGVEIKELDRIRELFTHPDVTDDYEIKWGKPDSEKLIKFLCKENDFSVDRVKKAVERLKVVSRGRQQTLDQWF.

Positions 1 to 98 are N-domain; the sequence is MGTDIGDLLQ…ETLNRRKEVR (98 aa). Positions 27, 80, 152, 154, 173, 175, and 236 each coordinate Mg(2+). The segment at 116–257 is I-domain; that stretch reads AAYKYAQASS…TALKLIKKHG (142 aa). The interaction with PCNA stretch occupies residues 330-338; it reads RQQTLDQWF.

It belongs to the XPG/RAD2 endonuclease family. FEN1 subfamily. In terms of assembly, interacts with PCNA. PCNA stimulates the nuclease activity without altering cleavage specificity. Mg(2+) is required as a cofactor.

In terms of biological role, structure-specific nuclease with 5'-flap endonuclease and 5'-3' exonuclease activities involved in DNA replication and repair. During DNA replication, cleaves the 5'-overhanging flap structure that is generated by displacement synthesis when DNA polymerase encounters the 5'-end of a downstream Okazaki fragment. Binds the unpaired 3'-DNA end and kinks the DNA to facilitate 5' cleavage specificity. Cleaves one nucleotide into the double-stranded DNA from the junction in flap DNA, leaving a nick for ligation. Also involved in the base excision repair (BER) pathway. Acts as a genome stabilization factor that prevents flaps from equilibrating into structures that lead to duplications and deletions. Also possesses 5'-3' exonuclease activity on nicked or gapped double-stranded DNA. The protein is Flap endonuclease 1 of Methanosarcina barkeri (strain Fusaro / DSM 804).